A 287-amino-acid polypeptide reads, in one-letter code: Intermediate filament family orphan 2 (287 aa).

An IF rod domain is found at 1–254 (MNLQTMVDTL…RLIKGSADRN (254 aa)). Residues 248-287 (KGSADRNSPSPSSVASSDSGSTDEIQDDLEREADVEPMVS) are disordered. The segment covering 255–267 (SPSPSSVASSDSG) has biased composition (low complexity). The span at 271-287 (EIQDDLEREADVEPMVS) shows a compositional bias: acidic residues.

It belongs to the intermediate filament family.

The polypeptide is Intermediate filament family orphan 2 (Iffo2) (Rattus norvegicus (Rat)).